Here is a 273-residue protein sequence, read N- to C-terminus: MATYFVGDIQGCLDELLLLLDQVSFDKEKDQLWLTGDLVARGPKSLETLRFVKSLDKAAVTILGNHDLHLLAVSQGISRIKEKDKTASIFTAPDSEELLTWLRHQPLLATHAQHNIVMTHAGISPQWNIETATECAREIESVLVSDKWVWLLENMYENQPDLWQSDLTGINRYRYIINAFTRMRFCYPDGRLDMECKQPPQELSSDDKEKLIPWFDLKSRCPLSHTVIFGHWAALMGYENNGVIALDTGCVWGEYMTMYRVDDGQYFTQKAIS.

This sequence belongs to the Ap4A hydrolase family.

It catalyses the reaction P(1),P(4)-bis(5'-adenosyl) tetraphosphate + H2O = 2 ADP + 2 H(+). Hydrolyzes diadenosine 5',5'''-P1,P4-tetraphosphate to yield ADP. The chain is Bis(5'-nucleosyl)-tetraphosphatase, symmetrical from Aliivibrio salmonicida (strain LFI1238) (Vibrio salmonicida (strain LFI1238)).